The sequence spans 305 residues: Protein FdhE homolog (305 aa).

This sequence belongs to the FdhE family.

The protein localises to the cytoplasm. Functionally, necessary for formate dehydrogenase activity. In Haemophilus ducreyi (strain 35000HP / ATCC 700724), this protein is Protein FdhE homolog.